A 78-amino-acid chain; its full sequence is Acyl carrier protein (78 aa).

Positions 2–77 (STIEERVKKI…AAIDYVNSHK (76 aa)) constitute a Carrier domain. Residue Ser-37 is modified to O-(pantetheine 4'-phosphoryl)serine.

It belongs to the acyl carrier protein (ACP) family. Post-translationally, 4'-phosphopantetheine is transferred from CoA to a specific serine of apo-ACP by AcpS. This modification is essential for activity because fatty acids are bound in thioester linkage to the sulfhydryl of the prosthetic group.

Its subcellular location is the cytoplasm. The protein operates within lipid metabolism; fatty acid biosynthesis. Functionally, carrier of the growing fatty acid chain in fatty acid biosynthesis. The chain is Acyl carrier protein from Pseudomonas putida (strain GB-1).